Consider the following 1117-residue polypeptide: Sodium-driven chloride bicarbonate exchanger (1117 aa).

Disordered regions lie at residues 1-23 (MEIK…EEAV) and 58-97 (GRKS…TPSQ). Over 1-508 (MEIKDQGAQM…DFRDAFSLQC (508 aa)) the chain is Cytoplasmic. Over residues 59 to 76 (RKSHRRHRHRGHKHRKRD) the composition is skewed to basic residues. S89 is subject to Phosphoserine. At T94 the chain carries Phosphothreonine. Residue S275 is modified to Phosphoserine. Disordered regions lie at residues 282–309 (DFSK…KGPP) and 431–476 (WDPS…PELQ). A helical transmembrane segment spans residues 509 to 529 (LASFLFLYCACMSPVITFGGL). Topologically, residues 530-537 (LGEATEGR) are extracellular. The chain crosses the membrane as a helical span at residues 538 to 558 (ISAIESLFGASMTGIAYSLFG). The Cytoplasmic portion of the chain corresponds to 559–561 (GQP). A helical transmembrane segment spans residues 562-582 (LTILGSTGPVLVFEKILFKFC). The Extracellular portion of the chain corresponds to 583-595 (KEYGLSYLSLRAS). The helical transmembrane segment at 596-616 (IGLWTATLCIILVATDASSLV) threads the bilayer. Topologically, residues 617-625 (CYITRFTEE) are cytoplasmic. The chain crosses the membrane as a helical span at residues 626-646 (AFASLICIIFIYEALEKLFEL). At 647-719 (SESYPINMHN…VGRACGHGHP (73 aa)) the chain is on the extracellular side. N-linked (GlcNAc...) asparagine glycosylation is found at N676, N686, and N696. A helical membrane pass occupies residues 720-740 (YVPDVLFWSVILFFSTVTMSA). At 741–761 (TLKQFKTSRYFPTKVRSIVSD) the chain is on the cytoplasmic side. Residues 762-782 (FAVFLTILCMVLIDYAIGIPS) traverse the membrane as a helical segment. At 783 to 808 (PKLQVPSVFKPTRDDRGWFVTPLGPN) the chain is on the extracellular side. Residues 809–829 (PWWTIIAAIIPALLCTILIFM) traverse the membrane as a helical segment. The Cytoplasmic segment spans residues 830 to 854 (DQQITAVIINRKEHKLKKGCGYHLD). Residues 855-875 (LLMVAVMLGVCSIMGLPWFVA) form a helical membrane-spanning segment. Residues 876–911 (ATVLSITHVNSLKLESECSAPGEQPKFLGIREQRVT) are Extracellular-facing. Residues 912–932 (GLMIFILMGSSVFMTSILKFI) traverse the membrane as a helical segment. The Cytoplasmic segment spans residues 933–934 (PM). The chain crosses the membrane as a helical span at residues 935-955 (PVLYGVFLYMGASSLKGIQLF). The Extracellular segment spans residues 956 to 997 (DRIKLFWMPAKHQPDFIYLRHVPLRKVHLFTVIQMSCLGLLW). A helical membrane pass occupies residues 998-1018 (IIKVSRAAIVFPMMVLALVFV). At 1019 to 1117 (RKLMDFLFTK…SRFPSKSSPS (99 aa)) the chain is on the cytoplasmic side. S1056 and S1084 each carry phosphoserine.

Belongs to the anion exchanger (TC 2.A.31) family. Post-translationally, N-glycosylated. In terms of tissue distribution, in the brain, detected in cerebral cortex, subcortex, cerebellum, hippocampus and medulla (at protein level). Expressed in neurons but not in astrocytes (at protein level). Isoforms starting with Met-Glu-Ile-Lys are found predominantly in the brain with lower levels in the eye while isoforms starting with Met-Cys-Asp-Leu are most abundant in the kidney with lower levels in the duodenum, jejunum and ileum (at protein level). In the kidney, isoforms starting with Met-Cys-Asp-Leu are primarily expressed in the cortex, the outer stripe of the outer medulla and the inner stripe of the outer medulla (ISOM) but are not detectable in the inner medulla (IM) while isoforms starting with Met-Glu-Ile-Lys are predominantly expressed in the ISOM and IM. Expressed in the brain, in the hippocampus as well as in dentate gyrus, cortical layers, cerebellum, olfactory bulb and in the epithelial cells of the choroid plexus. Detected in pituitary, testis, kidney and ileum. Detected also in spleen and lung. As to expression, mainly expressed in the jejenum (at protein level).

The protein resides in the basolateral cell membrane. The protein localises to the apical cell membrane. Its subcellular location is the cell projection. It localises to the dendrite. It is found in the axon. The protein resides in the perikaryon. The protein localises to the presynapse. Its subcellular location is the postsynapse. It catalyses the reaction 2 hydrogencarbonate(out) + chloride(in) + Na(+)(out) = 2 hydrogencarbonate(in) + chloride(out) + Na(+)(in). Functionally, sodium/bicarbonate cotransporter which plays an important role in regulating intracellular pH. Has been shown to act as a sodium/bicarbonate cotransporter in exchange for intracellular chloride. Has also been shown to act as a sodium/biocarbonate cotransporter which does not couple net influx of bicarbonate to net efflux of chloride, with the observed chloride efflux being due to chloride self-exchange. Controls neuronal pH and may contribute to the secretion of cerebrospinal fluid. Acting on presynaptic intracellular pH, it promotes GABA release, reduces the excitability of CA1 pyramidal neurons, and modulates short-term synaptic plasticity. Required in retinal cells to maintain normal pH which is necessary for normal vision. In the kidney, likely to mediate bicarbonate reclamation in the apical membrane of the proximal tubules. In terms of biological role, sodium/bicarbonate cotransporter which mediates cotransport of sodium and bicarbonate in association with an efflux of intracellular chloride and is involved in NaCl absorption in the small intestine. This is Sodium-driven chloride bicarbonate exchanger from Rattus norvegicus (Rat).